Here is a 605-residue protein sequence, read N- to C-terminus: DNA primase (605 aa).

Residues 38–62 form a CHC2-type zinc finger; that stretch reads CPFHDEKTPSFTVSEDKQICHCFGC. Residues 260–341 enclose the Toprim domain; that stretch reads DEIVLLEGFM…NVFVIQLPSG (82 aa). Mg(2+) is bound by residues Glu266, Asp310, and Asp312.

The protein belongs to the DnaG primase family. As to quaternary structure, monomer. Interacts with DnaB. Zn(2+) serves as cofactor. Mg(2+) is required as a cofactor.

It carries out the reaction ssDNA + n NTP = ssDNA/pppN(pN)n-1 hybrid + (n-1) diphosphate.. Its function is as follows. RNA polymerase that catalyzes the synthesis of short RNA molecules used as primers for DNA polymerase during DNA replication. The chain is DNA primase from Staphylococcus aureus.